A 181-amino-acid polypeptide reads, in one-letter code: UPF0301 protein MXAN_2022 (181 aa).

The protein belongs to the UPF0301 (AlgH) family.

This Myxococcus xanthus (strain DK1622) protein is UPF0301 protein MXAN_2022.